The primary structure comprises 32 residues: MESIRWLLTVAQFDFDMKLVQSXAIVNYVANK.

21–22 is a glutathione binding site; the sequence is QS.

Belongs to the GST superfamily. Alpha family. As to quaternary structure, homodimer. In terms of processing, the N-terminus is blocked.

It localises to the cytoplasm. It catalyses the reaction RX + glutathione = an S-substituted glutathione + a halide anion + H(+). Its function is as follows. Conjugation of reduced glutathione to a wide number of exogenous and endogenous hydrophobic electrophiles. This chain is Glutathione S-transferase 8.2, found in Dicentrarchus labrax (European seabass).